The following is a 267-amino-acid chain: Thymidylate synthase (267 aa).

DUMP is bound at residue Arg-24. (6R)-5,10-methylene-5,6,7,8-tetrahydrofolate is bound at residue His-54. 129 to 130 (RR) is a dUMP binding site. Cys-149 functions as the Nucleophile in the catalytic mechanism. Residues 169–172 (RSAD), Asn-180, and 210–212 (HVY) contribute to the dUMP site. Asp-172 serves as a coordination point for (6R)-5,10-methylene-5,6,7,8-tetrahydrofolate. Residue Ala-266 participates in (6R)-5,10-methylene-5,6,7,8-tetrahydrofolate binding.

The protein belongs to the thymidylate synthase family. Bacterial-type ThyA subfamily. As to quaternary structure, homodimer.

It localises to the cytoplasm. The enzyme catalyses dUMP + (6R)-5,10-methylene-5,6,7,8-tetrahydrofolate = 7,8-dihydrofolate + dTMP. It participates in pyrimidine metabolism; dTTP biosynthesis. Its function is as follows. Catalyzes the reductive methylation of 2'-deoxyuridine-5'-monophosphate (dUMP) to 2'-deoxythymidine-5'-monophosphate (dTMP) while utilizing 5,10-methylenetetrahydrofolate (mTHF) as the methyl donor and reductant in the reaction, yielding dihydrofolate (DHF) as a by-product. This enzymatic reaction provides an intracellular de novo source of dTMP, an essential precursor for DNA biosynthesis. This is Thymidylate synthase from Paenarthrobacter aurescens (strain TC1).